We begin with the raw amino-acid sequence, 972 residues long: Coatomer subunit beta (972 aa).

HEAT repeat units follow at residues 79–113 (LLYF…DLQH), 133–170 (ELLE…VSEH), 317–354 (GCLE…SRNI), 397–434 (EIAA…LYPQ), and 481–518 (RQSI…QAGP). The disordered stretch occupies residues 494–522 (LKNQRKSQDEDDEATEESATKQAGPVILP).

In terms of assembly, oligomeric complex that consists of at least the alpha, beta, beta', gamma, delta, epsilon and zeta subunits.

Its subcellular location is the cytoplasm. It localises to the golgi apparatus membrane. It is found in the cytoplasmic vesicle. The protein resides in the COPI-coated vesicle membrane. In terms of biological role, the coatomer is a cytosolic protein complex that binds to dilysine motifs and reversibly associates with Golgi non-clathrin-coated vesicles, which further mediate biosynthetic protein transport from the ER, via the Golgi up to the trans Golgi network. Coatomer complex is required for budding from Golgi membranes, and is essential for the retrograde Golgi-to-ER transport of dilysine-tagged proteins. In Candida glabrata (strain ATCC 2001 / BCRC 20586 / JCM 3761 / NBRC 0622 / NRRL Y-65 / CBS 138) (Yeast), this protein is Coatomer subunit beta.